Reading from the N-terminus, the 387-residue chain is Phosphoglycerate kinase (387 aa).

Substrate is bound by residues aspartate 21–asparagine 23, arginine 36, histidine 59–arginine 62, arginine 113, and arginine 146. Residues lysine 197, glutamate 314, and glycine 340–threonine 343 contribute to the ATP site.

Belongs to the phosphoglycerate kinase family. As to quaternary structure, monomer.

It is found in the cytoplasm. The catalysed reaction is (2R)-3-phosphoglycerate + ATP = (2R)-3-phospho-glyceroyl phosphate + ADP. Its pathway is carbohydrate degradation; glycolysis; pyruvate from D-glyceraldehyde 3-phosphate: step 2/5. This chain is Phosphoglycerate kinase, found in Klebsiella pneumoniae (strain 342).